Reading from the N-terminus, the 442-residue chain is Transcription factor AP-2-epsilon (442 aa).

The PPxY motif motif lies at 54 to 59; sequence YFPPPY. Ser-246 is modified (phosphoserine; by PKA). The H-S-H (helix-span-helix), dimerization stretch occupies residues 287 to 417; it reads RRKAANVTLL…YLLESLKGLD (131 aa).

The protein belongs to the AP-2 family. In terms of assembly, binds DNA as a dimer. Can form homodimers or heterodimers with other AP-2 family members. In terms of tissue distribution, expressed in skin, primary keratinocytes, immortalized keratinocytes, and HeLa cell line.

Its subcellular location is the nucleus. Functionally, sequence-specific DNA-binding protein that interacts with inducible viral and cellular enhancer elements to regulate transcription of selected genes. AP-2 factors bind to the consensus sequence 5'-GCCNNNGGC-3' and activate genes involved in a large spectrum of important biological functions including proper eye, face, body wall, limb and neural tube development. They also suppress a number of genes including MCAM/MUC18, C/EBP alpha and MYC. AP-2-epsilon may play a role in the development of the CNS and in cartilage differentiation. This Homo sapiens (Human) protein is Transcription factor AP-2-epsilon.